The sequence spans 1482 residues: Glutamate receptor ionotropic, NMDA 2B (1482 aa).

A signal peptide spans M1–A26. Over R27–D557 the chain is Extracellular. N-linked (GlcNAc...) asparagine glycosylation occurs at N74. C86 and C321 form a disulfide bridge. Positions 127 and 284 each coordinate Zn(2+). 4 N-linked (GlcNAc...) asparagine glycosylation sites follow: N341, N348, N444, and N491. 2 disulfide bridges follow: C429/C456 and C436/C457. L-glutamate-binding residues include T514 and R519. The N-linked (GlcNAc...) asparagine glycan is linked to N542. A helical membrane pass occupies residues V558–V576. Over F577 to G603 the chain is Cytoplasmic. The discontinuously helical intramembrane region spans K604–P623. The interval K604–P623 is pore-forming. Residues K624–I630 are Cytoplasmic-facing. The helical transmembrane segment at M631–Y646 threads the bilayer. At T647–N817 the chain is on the extracellular side. N-linked (GlcNAc...) asparagine glycosylation occurs at N688. L-glutamate is bound by residues S690, T691, and D732. The cysteines at positions 746 and 801 are disulfide-linked. Residues M818–I837 traverse the membrane as a helical segment. The Cytoplasmic segment spans residues C838–V1482. Phosphoserine occurs at positions 882, 886, 917, and 920. Y962 and Y1039 each carry phosphotyrosine. Phosphoserine occurs at positions 1058, 1061, and 1064. Y1109 and Y1133 each carry phosphotyrosine. The residue at position 1143 (S1143) is a Phosphoserine. The residue at position 1155 (Y1155) is a Phosphotyrosine. Residues D1161–P1194 are disordered. A phosphoserine mark is found at S1255 and S1259. The disordered stretch occupies residues P1269–Q1301. A compositionally biased stretch (polar residues) spans V1272–K1289. Residues A1290–Q1301 show a composition bias toward basic residues. Positions K1292–Y1304 are interaction with DAPK1. Position 1303 is a phosphoserine (S1303). Y1472 is modified (phosphotyrosine). Residues S1480–V1482 carry the PDZ-binding motif.

Belongs to the glutamate-gated ion channel (TC 1.A.10.1) family. NR2B/GRIN2B subfamily. As to quaternary structure, heterotetramer. Forms heterotetrameric channels composed of two GluN1/zeta subunits (GRIN1), and two identical GluN2/epsilon subunits (GRIN2A, GRIN2B, GRIN2C or GRIN2D) or GluN3 subunits (GRIN3A or GRIN3B) (in vitro). Can also form heterotetrameric channels that contain at least two GluN1 subunits and at least two different GluN2 subunits (or a combination of one GluN2 and one GluN3 subunits) (in vitro). In vivo, the subunit composition may depend on the expression levels of the different subunits. Found in a complex with GRIN1, GRIN3A and PPP2CB. Found in a complex with GRIN1 and GRIN3B. Interacts with MAGI3. Interacts with HIP1 and NETO1. Interacts with PDZ domains of PATJ, DLG3 and DLG4. Interacts with DAPK1. Found in a complex with GRIN1 and PRR7. Interacts with PRR7. Interacts with CAMK2A. Interacts with ARC; preventing ARC oligomerization. Interacts with TMEM25. Interacts (via the extreme C-terminus) with FRMPD2 (via the second PDZ domain); the interaction is direct and is likely to promote NMDAR-mediated neural signal transmission. Interacts with FAM81A; the interaction facilitates condensate formation via liquid-liquid phase separation. Phosphorylated on tyrosine residues. Phosphorylation at Ser-1303 by DAPK1 enhances synaptic NMDA receptor channel activity. Expressed in the hippocampus including the dentate gyrus (at protein level). Detected in adult olfactory bulb, brain cortex, hippocampus, striatum, thalamus, superior colliculus, with much lower levels in inferior colliculus, midbrain and cerebellum.

It localises to the cell membrane. The protein resides in the postsynaptic cell membrane. It is found in the late endosome. Its subcellular location is the lysosome. The protein localises to the cytoplasm. It localises to the cytoskeleton. It carries out the reaction Ca(2+)(in) = Ca(2+)(out). The catalysed reaction is Na(+)(in) = Na(+)(out). The enzyme catalyses K(+)(in) = K(+)(out). NMDA glutamate receptor activity is inhibited by micromolar levels of zinc ions. NMDA glutamate receptor activity is inhibited by ifenprodil. Its function is as follows. Component of N-methyl-D-aspartate (NMDA) receptors (NMDARs) that function as heterotetrameric, ligand-gated cation channels with high calcium permeability and voltage-dependent block by Mg(2+). Participates in synaptic plasticity for learning and memory formation by contributing to the long-term depression (LTD) of hippocampus membrane currents. Channel activation requires binding of the neurotransmitter L-glutamate to the GluN2 subunit, glycine or D-serine binding to the GluN1 subunit, plus membrane depolarization to eliminate channel inhibition by Mg(2+). NMDARs mediate simultaneously the potasium efflux and the influx of calcium and sodium. Each GluN2 subunit confers differential attributes to channel properties, including activation, deactivation and desensitization kinetics, pH sensitivity, Ca2(+) permeability, and binding to allosteric modulators. In concert with DAPK1 at extrasynaptic sites, acts as a central mediator for stroke damage. Its phosphorylation at Ser-1303 by DAPK1 enhances synaptic NMDA receptor channel activity inducing injurious Ca2+ influx through them, resulting in an irreversible neuronal death. The chain is Glutamate receptor ionotropic, NMDA 2B from Rattus norvegicus (Rat).